The chain runs to 395 residues: Elongation factor Tu (395 aa).

The tr-type G domain maps to 10 to 205 (KPHVNIGTIG…VDNWIPIPPR (196 aa)). A G1 region spans residues 19–26 (GHVDHGKT). 19-26 (GHVDHGKT) contacts GTP. Mg(2+) is bound at residue T26. Residues 60 to 64 (GITIN) form a G2 region. The interval 81–84 (DCPG) is G3. GTP is bound by residues 81-85 (DCPGH) and 136-139 (NKVD). The tract at residues 136-139 (NKVD) is G4. The G5 stretch occupies residues 174-176 (SAL).

It belongs to the TRAFAC class translation factor GTPase superfamily. Classic translation factor GTPase family. EF-Tu/EF-1A subfamily. In terms of assembly, monomer.

Its subcellular location is the cytoplasm. The catalysed reaction is GTP + H2O = GDP + phosphate + H(+). Its function is as follows. GTP hydrolase that promotes the GTP-dependent binding of aminoacyl-tRNA to the A-site of ribosomes during protein biosynthesis. In Hymenobacter ocellatus (Parahymenobacter ocellatus), this protein is Elongation factor Tu.